The sequence spans 311 residues: Olfactory receptor 5P3 (311 aa).

Over 1 to 25 (MGTGNDTTVVEFTLLGLSEDTTVCA) the chain is Extracellular. N5 carries an N-linked (GlcNAc...) asparagine glycan. Residues 26-46 (ILFLVFLGIYVVTLMGNISII) traverse the membrane as a helical segment. The Cytoplasmic segment spans residues 47–54 (VLIRRSHH). Residues 55–75 (LHTPMYIFLCHLAFVDIGYSS) form a helical membrane-spanning segment. The Extracellular segment spans residues 76 to 99 (SVTPVMLMSFLRKETSLPVAGCVA). C97 and C189 are disulfide-bonded. A helical transmembrane segment spans residues 100–120 (QLCSVVTFGTAECFLLAAMAY). The Cytoplasmic segment spans residues 121 to 139 (DRYVAICSPLLYSTCMSPG). The chain crosses the membrane as a helical span at residues 140–160 (VCIILVGMSYLGGCVNAWTFI). The Extracellular segment spans residues 161–196 (GCLLRLSFCGPNKVNHFFCDYSPLLKLACSHDFTFE). The chain crosses the membrane as a helical span at residues 197–217 (IIPAISSGSIIVATVCVIAIS). Over 218–237 (YIYILITILKMHSTKGRHKA) the chain is Cytoplasmic. A helical membrane pass occupies residues 238 to 258 (FSTCTSHLTAVTLFYGTITFI). The Extracellular segment spans residues 259–271 (YVMPKSSYSTDQN). The chain crosses the membrane as a helical span at residues 272–292 (KVVSVFYTVVIPMLNPLIYSL). At 293-311 (RNKEIKGALKRELRIKIFS) the chain is on the cytoplasmic side.

It belongs to the G-protein coupled receptor 1 family. In terms of tissue distribution, expressed in the tongue.

It localises to the cell membrane. Its function is as follows. Odorant receptor (Potential). May be involved in taste perception. The sequence is that of Olfactory receptor 5P3 (OR5P3) from Homo sapiens (Human).